We begin with the raw amino-acid sequence, 434 residues long: D-amino acid dehydrogenase (434 aa).

V3–W17 contributes to the FAD binding site.

The protein belongs to the DadA oxidoreductase family. It depends on FAD as a cofactor.

It catalyses the reaction a D-alpha-amino acid + A + H2O = a 2-oxocarboxylate + AH2 + NH4(+). Its pathway is amino-acid degradation; D-alanine degradation; NH(3) and pyruvate from D-alanine: step 1/1. Oxidative deamination of D-amino acids. This chain is D-amino acid dehydrogenase, found in Proteus mirabilis (strain HI4320).